The following is a 706-amino-acid chain: Sodium- and chloride-dependent glycine transporter 1 (706 aa).

The segment at 1–26 (MSGGDTRAAIARPRMAAAHGPVAPSS) is disordered. The Cytoplasmic portion of the chain corresponds to 1 to 108 (MSGGDTRAAI…KRGNWGNQIE (108 aa)). A compositionally biased stretch (low complexity) spans 7-18 (RAAIARPRMAAA). Transmembrane regions (helical) follow at residues 109–129 (FVLT…FPYL), 136–156 (GAFM…LFFM), and 188–208 (VSTY…YYFF). The Extracellular portion of the chain corresponds to 209 to 285 (SSMTHVLPWA…LSDDIGNFGE (77 aa)). Transmembrane regions (helical) follow at residues 286–306 (VRLP…LCLI), 315–335 (VVYF…VRGV), 360–380 (VWGD…GGLI), 407–427 (SVYA…HLGV), 450–470 (LLPI…LLGL), 506–526 (VAGF…WLLL), 530–550 (YAAS…IMYI), 570–590 (LFFQ…ILVF), and 610–630 (VAIG…YAMF). The Cytoplasmic portion of the chain corresponds to 631–706 (RLCRTDGDTL…GSSRLQDSRI (76 aa)). Phosphoserine occurs at positions 673 and 698. An essential for interaction with EXOC1 region spans residues 695–706 (SNGSSRLQDSRI).

The protein belongs to the sodium:neurotransmitter symporter (SNF) (TC 2.A.22) family. SLC6A9 subfamily. In terms of assembly, interacts with EXOC1; interaction increases the transporter capacity of SLC6A9 probably by promoting its insertion into the cell membrane. Interacts with EXOC3 and EXOC4. As to expression, expressed in the brain, kidney, pancreas, lung, placenta and liver. Expressed only in the brain.

The protein resides in the cell membrane. It carries out the reaction glycine(out) + chloride(out) + 2 Na(+)(out) = glycine(in) + chloride(in) + 2 Na(+)(in). Inhibited by sarcosine. Functionally, sodium- and chloride-dependent glycine transporter. Essential for regulating glycine concentrations at inhibitory glycinergic synapses. Its function is as follows. Sodium- and chloride-dependent glycine transporter. The sequence is that of Sodium- and chloride-dependent glycine transporter 1 (SLC6A9) from Homo sapiens (Human).